Reading from the N-terminus, the 459-residue chain is Putrescine aminotransferase (459 aa).

Pyridoxal 5'-phosphate is bound by residues 150–151 (GT) and Q274. K300 is subject to N6-(pyridoxal phosphate)lysine. T332 lines the pyridoxal 5'-phosphate pocket.

This sequence belongs to the class-III pyridoxal-phosphate-dependent aminotransferase family. Putrescine aminotransferase subfamily. Pyridoxal 5'-phosphate is required as a cofactor.

The catalysed reaction is an alkane-alpha,omega-diamine + 2-oxoglutarate = an omega-aminoaldehyde + L-glutamate. It catalyses the reaction putrescine + 2-oxoglutarate = 1-pyrroline + L-glutamate + H2O. It carries out the reaction cadaverine + 2-oxoglutarate = 5-aminopentanal + L-glutamate. Its pathway is amine and polyamine degradation; putrescine degradation; 4-aminobutanal from putrescine (transaminase route): step 1/1. Its function is as follows. Catalyzes the aminotransferase reaction from putrescine to 2-oxoglutarate, leading to glutamate and 4-aminobutanal, which spontaneously cyclizes to form 1-pyrroline. This is the first step in one of two pathways for putrescine degradation, where putrescine is converted into 4-aminobutanoate (gamma-aminobutyrate or GABA) via 4-aminobutanal. Also functions as a cadaverine transaminase in a a L-lysine degradation pathway to succinate that proceeds via cadaverine, glutarate and L-2-hydroxyglutarate. This Escherichia coli (strain K12 / MC4100 / BW2952) protein is Putrescine aminotransferase.